The following is a 353-amino-acid chain: Probable protein phosphatase 2C 48 (353 aa).

A PPM-type phosphatase domain is found at 54–348; that stretch reads FAAVCSRRGE…DDCSAICLFF (295 aa). Mn(2+) is bound by residues Asp-90, Gly-91, Asp-293, and Asp-339.

It belongs to the PP2C family. Requires Mg(2+) as cofactor. Mn(2+) is required as a cofactor.

The catalysed reaction is O-phospho-L-seryl-[protein] + H2O = L-seryl-[protein] + phosphate. The enzyme catalyses O-phospho-L-threonyl-[protein] + H2O = L-threonyl-[protein] + phosphate. This Oryza sativa subsp. japonica (Rice) protein is Probable protein phosphatase 2C 48.